The sequence spans 279 residues: Tryptophan 2,3-dioxygenase (279 aa).

Substrate contacts are provided by residues 48–52 (FIVIH), Y110, and R114. Position 237 (H237) interacts with heme. T251 contacts substrate.

It belongs to the tryptophan 2,3-dioxygenase family. As to quaternary structure, homotetramer. The cofactor is heme.

The catalysed reaction is L-tryptophan + O2 = N-formyl-L-kynurenine. Its pathway is amino-acid degradation; L-tryptophan degradation via kynurenine pathway; L-kynurenine from L-tryptophan: step 1/2. In terms of biological role, heme-dependent dioxygenase that catalyzes the oxidative cleavage of the L-tryptophan (L-Trp) pyrrole ring and converts L-tryptophan to N-formyl-L-kynurenine. Catalyzes the oxidative cleavage of the indole moiety. In Bacillus thuringiensis (strain Al Hakam), this protein is Tryptophan 2,3-dioxygenase.